The primary structure comprises 239 residues: uncharacterized protein (239 aa).

It is found in the endoplasmic reticulum. It localises to the golgi apparatus. This is an uncharacterized protein from Schizosaccharomyces pombe (strain 972 / ATCC 24843) (Fission yeast).